Reading from the N-terminus, the 477-residue chain is Aspartyl/glutamyl-tRNA(Asn/Gln) amidotransferase subunit B (477 aa).

The protein belongs to the GatB/GatE family. GatB subfamily. Heterotrimer of A, B and C subunits.

The enzyme catalyses L-glutamyl-tRNA(Gln) + L-glutamine + ATP + H2O = L-glutaminyl-tRNA(Gln) + L-glutamate + ADP + phosphate + H(+). It carries out the reaction L-aspartyl-tRNA(Asn) + L-glutamine + ATP + H2O = L-asparaginyl-tRNA(Asn) + L-glutamate + ADP + phosphate + 2 H(+). Functionally, allows the formation of correctly charged Asn-tRNA(Asn) or Gln-tRNA(Gln) through the transamidation of misacylated Asp-tRNA(Asn) or Glu-tRNA(Gln) in organisms which lack either or both of asparaginyl-tRNA or glutaminyl-tRNA synthetases. The reaction takes place in the presence of glutamine and ATP through an activated phospho-Asp-tRNA(Asn) or phospho-Glu-tRNA(Gln). This chain is Aspartyl/glutamyl-tRNA(Asn/Gln) amidotransferase subunit B, found in Sulfurovum sp. (strain NBC37-1).